A 772-amino-acid polypeptide reads, in one-letter code: Hyperosmolality-gated Ca2+ permeable channel 1.1 (772 aa).

The Extracellular segment spans residues 1–5 (MATLK). A helical membrane pass occupies residues 6–28 (DIGVSAGINILTAFIFFIIFAFL). Over 29 to 100 (RLQPFNDRVY…AGLDSVVYLR (72 aa)) the chain is Cytoplasmic. Residues 101 to 122 (IYWLGLKIFAPIAMLAWAVLVP) form a helical membrane-spanning segment. Topologically, residues 123–159 (VNWTNNELELAKHFKNVTSSDIDKLTISNIPEGSNRF) are extracellular. An N-linked (GlcNAc) asparagine glycan is attached at N138. A helical membrane pass occupies residues 160–180 (WAHIIMAYAFTIWTCYMLMKE). The Cytoplasmic portion of the chain corresponds to 181–372 (YETVANMRLQ…PNLAIPYVSL (192 aa)). The tract at residues 339 to 344 (QTTQTR) is cytoplasmic region required for homodimerization. Residues 373–398 (TVRRLVMNVAFFFLTFFFIIPIAFVQ) form a helical membrane-spanning segment. The Extracellular portion of the chain corresponds to 399-424 (SLATIEGIEKVAPFLKVIIEKDFIKS). The helical transmembrane segment at 425–450 (LIQGLLAGIALKLFLIFLPAILMTMS) threads the bilayer. The Cytoplasmic portion of the chain corresponds to 451–461 (KFEGFTSVSFL). A helical membrane pass occupies residues 462–485 (ERRSASRYYIFNLVNVFLGSVIAG). The Extracellular portion of the chain corresponds to 486–509 (AAFEQLNSFLNQSPNQIPKTIGMA). A helical membrane pass occupies residues 510–538 (IPMKATFFITYIMVDGWAGVAGEILMLKP). Topologically, residues 539–566 (LIIYHLKNAFLVKTEKDREEAMNPGSIG) are cytoplasmic. A helical membrane pass occupies residues 567-587 (FNTGEPQIQLYFLLGLVYAPV). A topological domain (extracellular) is located at residue T588. A helical membrane pass occupies residues 589–606 (PMLLPFILVFFALAYVVY). Residues 607 to 624 (RHQIINVYNQEYESAAAF) lie on the Cytoplasmic side of the membrane. The helical transmembrane segment at 625 to 647 (WPDVHGRVITALIISQLLLMGLL) threads the bilayer. The Extracellular portion of the chain corresponds to 648–653 (GTKHAA). Residues 654–674 (SAAPFLIALPVITIGFHRFCK) form a helical membrane-spanning segment. Residues 675 to 772 (GRFEPAFVRY…SLAVINGKEV (98 aa)) are Cytoplasmic-facing. The interval 686–688 (LQE) is cytoplasmic region required for homodimerization. The disordered stretch occupies residues 743–772 (KRQSRRNTPAPSRISGESSPSLAVINGKEV). Residues 748–763 (RNTPAPSRISGESSPS) are compositionally biased toward polar residues.

It belongs to the CSC1 (TC 1.A.17) family. Homodimer. Expressed in leaves, flowers, roots and guard cells.

The protein resides in the cell membrane. Its activity is regulated as follows. Activated by mechanical pressure. In terms of biological role, acts as a hyperosmolarity-gated non-selective cation channel that permeates Ca(2+) ions. Shows the following permeability sequence: K(+) &gt; Ba(2+) = Ca(2+) &gt; Na(+) = Mg(2+) = Cs(+). Mechanosensitive ion channel that converts mechanical stimuli into a flow of ions: activated in response to membrane stretch and poke. This Arabidopsis thaliana (Mouse-ear cress) protein is Hyperosmolality-gated Ca2+ permeable channel 1.1.